Here is a 390-residue protein sequence, read N- to C-terminus: Probable protein phosphatase 2C 30 (390 aa).

The segment covering 1-10 (MQLSKNPIKQ) has biased composition (polar residues). Disordered stretches follow at residues 1 to 20 (MQLS…NYTD) and 40 to 85 (PPLV…DSET). Residues 44–61 (FSPTSVKTPLSSPRSSPP) show a composition bias toward low complexity. A PPM-type phosphatase domain is found at 128-385 (YYSVYCKRGR…DDISLIIIQL (258 aa)). Mn(2+) contacts are provided by Asp-166, Gly-167, Asp-331, and Asp-376.

The protein belongs to the PP2C family. Mg(2+) is required as a cofactor. Requires Mn(2+) as cofactor.

It carries out the reaction O-phospho-L-seryl-[protein] + H2O = L-seryl-[protein] + phosphate. The enzyme catalyses O-phospho-L-threonyl-[protein] + H2O = L-threonyl-[protein] + phosphate. This Arabidopsis thaliana (Mouse-ear cress) protein is Probable protein phosphatase 2C 30 (PP2C5).